We begin with the raw amino-acid sequence, 299 residues long: Phosphatidylcholine-sterol acyltransferase (299 aa).

Residues Asn28 and Asn184 are each glycosylated (N-linked (GlcNAc...) asparagine). The cysteines at positions 225 and 268 are disulfide-linked. The active-site Charge relay system is Asp257. Asn285 is a glycosylation site (N-linked (GlcNAc...) asparagine). His289 serves as the catalytic Charge relay system. The N-linked (GlcNAc...) asparagine glycan is linked to Asn296.

The protein belongs to the AB hydrolase superfamily. Lipase family.

The protein localises to the secreted. The enzyme catalyses a sterol + a 1,2-diacyl-sn-glycero-3-phosphocholine = a sterol ester + a 1-acyl-sn-glycero-3-phosphocholine. APOA1 is the most potent activator in plasma. Also activated by APOE, APOC1 and APOA4. In terms of biological role, central enzyme in the extracellular metabolism of plasma lipoproteins. Synthesized mainly in the liver and secreted into plasma where it converts cholesterol and phosphatidylcholines (lecithins) to cholesteryl esters and lysophosphatidylcholines on the surface of high and low density lipoproteins (HDLs and LDLs). The cholesterol ester is then transported back to the liver. Has a preference for plasma 16:0-18:2 or 18:O-18:2 phosphatidylcholines. Also produced in the brain by primary astrocytes, and esterifies free cholesterol on nascent APOE-containing lipoproteins secreted from glia and influences cerebral spinal fluid (CSF) APOE- and APOA1 levels. Together with APOE and the cholesterol transporter ABCA1, plays a key role in the maturation of glial-derived, nascent lipoproteins. Required for remodeling high-density lipoprotein particles into their spherical forms. This chain is Phosphatidylcholine-sterol acyltransferase (LCAT), found in Micromys minutus (European harvest mouse).